Here is a 125-residue protein sequence, read N- to C-terminus: Putative glutaredoxin-C2 (125 aa).

The 102-residue stretch at Ala2–Trp103 folds into the Glutaredoxin domain. Cys22 and Cys25 are joined by a disulfide.

This sequence belongs to the glutaredoxin family. CC-type subfamily.

Its subcellular location is the cytoplasm. Has a glutathione-disulfide oxidoreductase activity in the presence of NADPH and glutathione reductase. Reduces low molecular weight disulfides and proteins. The protein is Putative glutaredoxin-C2 (GRXC2) of Oryza sativa subsp. japonica (Rice).